The following is a 424-amino-acid chain: N-succinylarginine dihydrolase (424 aa).

Substrate-binding positions include 19-28 (AGLSPGNIAS), Asn-110, and 137-138 (HR). Glu-174 is an active-site residue. Residue Arg-207 coordinates substrate. The active site involves His-240. Substrate is bound by residues Asp-242 and Asn-349. Residue Cys-355 is the Nucleophile of the active site.

Belongs to the succinylarginine dihydrolase family. Homodimer.

The enzyme catalyses N(2)-succinyl-L-arginine + 2 H2O + 2 H(+) = N(2)-succinyl-L-ornithine + 2 NH4(+) + CO2. It participates in amino-acid degradation; L-arginine degradation via AST pathway; L-glutamate and succinate from L-arginine: step 2/5. Catalyzes the hydrolysis of N(2)-succinylarginine into N(2)-succinylornithine, ammonia and CO(2). The sequence is that of N-succinylarginine dihydrolase from Rhizorhabdus wittichii (strain DSM 6014 / CCUG 31198 / JCM 15750 / NBRC 105917 / EY 4224 / RW1) (Sphingomonas wittichii).